Reading from the N-terminus, the 253-residue chain is tRNA pseudouridine synthase A (253 aa).

Asp53 functions as the Nucleophile in the catalytic mechanism. Residue Tyr112 coordinates substrate.

This sequence belongs to the tRNA pseudouridine synthase TruA family. In terms of assembly, homodimer.

The enzyme catalyses uridine(38/39/40) in tRNA = pseudouridine(38/39/40) in tRNA. Formation of pseudouridine at positions 38, 39 and 40 in the anticodon stem and loop of transfer RNAs. This Lactococcus lactis subsp. cremoris (strain MG1363) protein is tRNA pseudouridine synthase A.